The primary structure comprises 360 residues: Aminomethyltransferase (360 aa).

It belongs to the GcvT family. The glycine cleavage system is composed of four proteins: P, T, L and H.

It catalyses the reaction N(6)-[(R)-S(8)-aminomethyldihydrolipoyl]-L-lysyl-[protein] + (6S)-5,6,7,8-tetrahydrofolate = N(6)-[(R)-dihydrolipoyl]-L-lysyl-[protein] + (6R)-5,10-methylene-5,6,7,8-tetrahydrofolate + NH4(+). Functionally, the glycine cleavage system catalyzes the degradation of glycine. This chain is Aminomethyltransferase, found in Legionella pneumophila subsp. pneumophila (strain Philadelphia 1 / ATCC 33152 / DSM 7513).